Consider the following 382-residue polypeptide: Non-structural maintenance of chromosomes element 4 homolog A (382 aa).

Over residues 1–21 (MSGDSSGRRPEGRGRGRDPHR) the composition is skewed to basic and acidic residues. Residues 1–80 (MSGDSSGRRP…ASLEEETDPS (80 aa)) are disordered. Residues 31 to 41 (RSPLSPGSRRG) show a composition bias toward low complexity. Residues 42 to 55 (AAPERREAPERPGL) show a composition bias toward basic and acidic residues. Residues 56-78 (EDTEPSDSGDEMIDPASLEEETD) show a composition bias toward acidic residues. T342 bears the Phosphothreonine mark. S374 carries the phosphoserine modification.

It belongs to the NSE4 family. As to quaternary structure, component of the SMC5-SMC6 complex which consists at least of SMC5, SMC6, NSMCE2, NSMCE1, NSMCE4A or EID3 and NSMCE3. NSMCE1, NSMCE4A or EID3 and NSMCE3 probably form a subcomplex that bridges the head domains of the SMC5:SMC6 heterodimer. Interacts with NSMCE3.

It localises to the nucleus. Its subcellular location is the chromosome. It is found in the telomere. Its function is as follows. Component of the SMC5-SMC6 complex, a complex involved in repair of DNA double-strand breaks by homologous recombination. The complex may promote sister chromatid homologous recombination by recruiting the SMC1-SMC3 cohesin complex to double-strand breaks. The complex is required for telomere maintenance via recombination and mediates sumoylation of shelterin complex (telosome) components. In Bos taurus (Bovine), this protein is Non-structural maintenance of chromosomes element 4 homolog A (NSMCE4A).